A 273-amino-acid chain; its full sequence is 2,3,4,5-tetrahydropyridine-2,6-dicarboxylate N-succinyltransferase (273 aa).

Substrate is bound by residues arginine 104 and aspartate 141.

This sequence belongs to the transferase hexapeptide repeat family. In terms of assembly, homotrimer.

Its subcellular location is the cytoplasm. It catalyses the reaction (S)-2,3,4,5-tetrahydrodipicolinate + succinyl-CoA + H2O = (S)-2-succinylamino-6-oxoheptanedioate + CoA. The protein operates within amino-acid biosynthesis; L-lysine biosynthesis via DAP pathway; LL-2,6-diaminopimelate from (S)-tetrahydrodipicolinate (succinylase route): step 1/3. This chain is 2,3,4,5-tetrahydropyridine-2,6-dicarboxylate N-succinyltransferase, found in Neisseria meningitidis serogroup B (strain ATCC BAA-335 / MC58).